Here is a 442-residue protein sequence, read N- to C-terminus: Tubulin beta chain (442 aa).

7 residues coordinate GTP: Gln-11, Glu-67, Ser-136, Gly-140, Thr-141, Gly-142, and Asn-202. A Mg(2+)-binding site is contributed by Glu-67.

Belongs to the tubulin family. As to quaternary structure, dimer of alpha and beta chains. A typical microtubule is a hollow water-filled tube with an outer diameter of 25 nm and an inner diameter of 15 nM. Alpha-beta heterodimers associate head-to-tail to form protofilaments running lengthwise along the microtubule wall with the beta-tubulin subunit facing the microtubule plus end conferring a structural polarity. Microtubules usually have 13 protofilaments but different protofilament numbers can be found in some organisms and specialized cells. The cofactor is Mg(2+).

The protein localises to the cytoplasm. It localises to the cytoskeleton. Tubulin is the major constituent of microtubules, a cylinder consisting of laterally associated linear protofilaments composed of alpha- and beta-tubulin heterodimers. Microtubules grow by the addition of GTP-tubulin dimers to the microtubule end, where a stabilizing cap forms. Below the cap, tubulin dimers are in GDP-bound state, owing to GTPase activity of alpha-tubulin. This Euglena gracilis protein is Tubulin beta chain (TUBB).